A 932-amino-acid polypeptide reads, in one-letter code: DNA mismatch repair protein MutS (932 aa).

Glycine 615–serine 622 is a binding site for ATP.

Belongs to the DNA mismatch repair MutS family.

In terms of biological role, this protein is involved in the repair of mismatches in DNA. It is possible that it carries out the mismatch recognition step. This protein has a weak ATPase activity. This is DNA mismatch repair protein MutS from Clostridium botulinum (strain Okra / Type B1).